The primary structure comprises 217 residues: Histone H1C (217 aa).

Composition is skewed to low complexity over residues 1–11 (MAETASTETTP) and 28–45 (KKAA…PSAS). 2 disordered regions span residues 1 to 45 (MAET…PSAS) and 123 to 217 (VAKK…AAKK). Residues 40 to 113 (SGPSASELIV…GASGSFKLNK (74 aa)) enclose the H15 domain. Basic residues-rich tracts occupy residues 123–151 (VAKK…KPKK) and 159–217 (SPKK…AAKK).

Belongs to the histone H1/H5 family.

The protein resides in the nucleus. The protein localises to the chromosome. Functionally, histones H1 are necessary for the condensation of nucleosome chains into higher-order structures. This Xenopus laevis (African clawed frog) protein is Histone H1C.